The primary structure comprises 573 residues: Vacuolar protein 8 (573 aa).

Positions 1-36 (MAASAADRMGRQRMSGLSCSAPPRPTVVTNPGNKQD) are disordered. Over residues 27 to 36 (VVTNPGNKQD) the composition is skewed to polar residues. ARM repeat units follow at residues 60–97 (NRGEVDFFSNGPLRALSTLVYSDNIDLQRSAALAFAEI), 98–137 (TEKDIRPVNRDCLEPVLLLLQNTDPDIQRAASAALGNLAV), 139–178 (NENKVLIVEMGGFEPLIRQMMSPNVEVQCNAVGCITNLAT), 180–219 (EANKSKIARSGALLPLTKLAKSKDMRVQRNATGALLNMTH), 221–260 (DQNRQELVNAGAIPILVSLLSSRDPDVQYYSTTALSNIAV), 264–303 (NRKKLSSSEPRLVEHLIKLMDSGSPRVQCQAALALRNLAS), 305–344 (SDYQLEIVKANGLPHLFNLFQSTHTPLVLAAVACIRNISI), 346–386 (PLNE…NLAA), and 430–469 (DELKGTLLELGIAEVLIPLTLSDNIEVQGNSAAALGNLSS).

This sequence belongs to the beta-catenin family.

The protein resides in the vacuole membrane. In terms of biological role, functions in both vacuole inheritance and protein targeting from the cytoplasm to vacuole. The protein is Vacuolar protein 8 (VAC8) of Yarrowia lipolytica (strain CLIB 122 / E 150) (Yeast).